The sequence spans 174 residues: Translation initiation factor IF-3 (174 aa).

This sequence belongs to the IF-3 family. Monomer.

The protein resides in the cytoplasm. In terms of biological role, IF-3 binds to the 30S ribosomal subunit and shifts the equilibrium between 70S ribosomes and their 50S and 30S subunits in favor of the free subunits, thus enhancing the availability of 30S subunits on which protein synthesis initiation begins. The polypeptide is Translation initiation factor IF-3 (Helicobacter hepaticus (strain ATCC 51449 / 3B1)).